A 472-amino-acid chain; its full sequence is 2-methylcitrate synthase, mitochondrial (472 aa).

Residues 1–29 constitute a mitochondrion transit peptide; that stretch reads MALNLTTSRRALGSLKPLTRAAFVGARGY. CoA-binding residues include R75 and K193. H271 is an oxaloacetate binding site. L306 is a binding site for CoA. H307 is a catalytic residue. Residues V348, G350, and Y351 each contribute to the CoA site. The oxaloacetate site is built by H353 and R362. The active site involves H353. CoA contacts are provided by T402, K403, and N408. D410 is a catalytic residue. Residues R436 and R456 each contribute to the oxaloacetate site.

This sequence belongs to the citrate synthase family. In terms of assembly, homodimer.

It localises to the mitochondrion matrix. It carries out the reaction propanoyl-CoA + oxaloacetate + H2O = (2S,3S)-2-methylcitrate + CoA + H(+). It catalyses the reaction oxaloacetate + acetyl-CoA + H2O = citrate + CoA + H(+). It participates in organic acid metabolism; propanoate degradation. Its function is as follows. Component of the methylcitrate cycle that catalyzes the synthesis of (2S,3S)-2-methylcitrate from propionyl-CoA and oxaloacetate. Plays an important role in detoxification of propionyl-CoA, an inhibitor of both primary and secondary metabolism. Also has citrate synthase activity using as substrates acetyl-CoA and oxaloacetate. This is 2-methylcitrate synthase, mitochondrial from Fusarium solani (Filamentous fungus).